We begin with the raw amino-acid sequence, 160 residues long: Protein BOLA1, chloroplastic (160 aa).

The N-terminal 50 residues, 1–50 (MFSSSIRLIVSGFHRTQPLKSPVNSPSVFISVPKFFNSESKSTGTGSRSV), are a transit peptide targeting the chloroplast. The span at 39–61 (ESKSTGTGSRSVAMSSVEKTGSD) shows a compositional bias: polar residues. Residues 39-66 (ESKSTGTGSRSVAMSSVEKTGSDSGAIE) are disordered.

It belongs to the bolA/yrbA family. In terms of assembly, interacts in vitro with GRXS14, GRXS15, GRXS16 and GRXS17, but not with GRXC5. Interacts in vivo only with GRXS14 and GRXS16.

It is found in the plastid. The protein localises to the chloroplast. In terms of biological role, may act either alone or in interaction with glutaredoxin as a redox-regulated transcriptional regulator, or as a factor regulating Fe-S cluster biogenesis. The glutaredoxin-BOLA1 heterodimers bind a labile, oxygen sensitive iron-sulfur cluster. The chain is Protein BOLA1, chloroplastic from Arabidopsis thaliana (Mouse-ear cress).